The primary structure comprises 138 residues: Flagellar basal body rod protein FlgB (138 aa).

Belongs to the flagella basal body rod proteins family. In terms of assembly, the basal body constitutes a major portion of the flagellar organelle and consists of a number of rings mounted on a central rod. In Gram-negative bacteria, at least four rings, L, P, S and M are present, whereas Gram-positive bacteria lack the L and P rings. The rod consists of about 26 subunits of FlgG in the distal portion, and FlgB, FlgC and FlgF build up the proximal portion of the rod with about 6 subunits each. Rod assembly occurs by export via the flagellum-specific pathway of its constituent proteins and by their incorporation into the rod structure in the probable order of FlgB, FlgC, FlgF and FlgG. Another protein, FliE, also assembles onto the stable rod structure. Interacts with FliE and peptidoglycan hydrolase FlgJ (via N-terminus), which seems to function as a scaffold or cap for rod assembly.

It localises to the bacterial flagellum basal body. In terms of biological role, structural component of flagellum, the bacterial motility apparatus. Part of the rod structure of flagellar basal body. This is Flagellar basal body rod protein FlgB (flgB) from Salmonella typhimurium (strain LT2 / SGSC1412 / ATCC 700720).